The chain runs to 448 residues: Fibulin-5 (448 aa).

The N-terminal stretch at 1-23 (MPGIKRILTVTILALCLPSPGNA) is a signal peptide. The region spanning 42-82 (DIDECRTIPEACRGDMMCVNQNGRYLCIPRTNPVYRGPYSN) is the EGF-like 1; calcium-binding domain. 17 disulfides stabilise this stretch: C46–C59, C53–C68, C131–C144, C138–C153, C155–C166, C172–C181, C177–C190, C192–C205, C211–C221, C217–C230, C232–C245, C251–C262, C258–C271, C273–C286, C292–C305, C299–C314, and C320–C332. The Cell attachment site signature appears at 54–56 (RGD). The region spanning 127–167 (DVDECATDSHQCNPTQICINTEGGYTCSCTDGYWLLEGQCL) is the EGF-like 2; calcium-binding domain. Residues 168–206 (DIDECRYGYCQQLCANVPGSYSCTCNPGFTLNEDGRSCQ) form the EGF-like 3; calcium-binding domain. Positions 207-246 (DVNECATENPCVQTCVNTYGSFICRCDPGYELEEDGVHCS) constitute an EGF-like 4; calcium-binding domain. The interaction with LOXL1 stretch occupies residues 245 to 448 (CSDMDECSFS…LRIYVSQYPF (204 aa)). The EGF-like 5; calcium-binding domain maps to 247–287 (DMDECSFSEFLCQHECVNQPGTYFCSCPPGYILLDDNRSCQ). 2 N-linked (GlcNAc...) asparagine glycosylation sites follow: N283 and N296. One can recognise an EGF-like 6; calcium-binding domain in the interval 288-333 (DINECEHRNHTCNLQQTCYNLQGGFKCIDPIRCEEPYLRISDNRCM).

The protein belongs to the fibulin family. Homodimer. Monomer, homodimerizes in presence of Ca(2+). Interacts with ELN. Interacts (via N-terminus) with the integrins ITGAV/ITGB3, ITGAV/ITGB5 and ITGA9/ITGB1. Interacts with FBN1 (via N-terminal domain). Forms a ternary complex with ELN and FBN1. Interacts with EFEMP2 with moderate affinity. Interacts with LOXL1. In terms of processing, N-glycosylated.

The protein resides in the secreted. It localises to the extracellular space. The protein localises to the extracellular matrix. Functionally, essential for elastic fiber formation, is involved in the assembly of continuous elastin (ELN) polymer and promotes the interaction of microfibrils and ELN. Stabilizes and organizes elastic fibers in the skin, lung and vasculature. Promotes adhesion of endothelial cells through interaction of integrins and the RGD motif. Vascular ligand for integrin receptors which may play a role in vascular development and remodeling. May act as an adapter that mediates the interaction between FBN1 and ELN. This chain is Fibulin-5 (FBLN5), found in Pongo abelii (Sumatran orangutan).